The primary structure comprises 883 residues: DNA mismatch repair protein MutS (883 aa).

Residues 1-25 (MSDSVAPDVPVIREGKNPAQHRDRT) are disordered. The span at 11–25 (VIREGKNPAQHRDRT) shows a compositional bias: basic and acidic residues. Residue 664–671 (GPNASGKS) participates in ATP binding. Positions 857–883 (RKGNTQPRARKSSAETEAKTQQFELPF) are disordered.

The protein belongs to the DNA mismatch repair MutS family.

Its function is as follows. This protein is involved in the repair of mismatches in DNA. It is possible that it carries out the mismatch recognition step. This protein has a weak ATPase activity. This Acaryochloris marina (strain MBIC 11017) protein is DNA mismatch repair protein MutS.